A 392-amino-acid chain; its full sequence is Nicotinate phosphoribosyltransferase (392 aa).

His-214 is modified (phosphohistidine; by autocatalysis).

The protein belongs to the NAPRTase family. Transiently phosphorylated on a His residue during the reaction cycle. Phosphorylation strongly increases the affinity for substrates and increases the rate of nicotinate D-ribonucleotide production. Dephosphorylation regenerates the low-affinity form of the enzyme, leading to product release.

The catalysed reaction is nicotinate + 5-phospho-alpha-D-ribose 1-diphosphate + ATP + H2O = nicotinate beta-D-ribonucleotide + ADP + phosphate + diphosphate. The protein operates within cofactor biosynthesis; NAD(+) biosynthesis; nicotinate D-ribonucleotide from nicotinate: step 1/1. Catalyzes the synthesis of beta-nicotinate D-ribonucleotide from nicotinate and 5-phospho-D-ribose 1-phosphate at the expense of ATP. The protein is Nicotinate phosphoribosyltransferase of Xanthomonas axonopodis pv. citri (strain 306).